The sequence spans 130 residues: uncharacterized protein (130 aa).

A disordered region spans residues 76–102; that stretch reads RKCKNGPSPNKRGSASGCSRRGGGRGS.

This is an uncharacterized protein from Saccharomyces cerevisiae (strain ATCC 204508 / S288c) (Baker's yeast).